Here is a 157-residue protein sequence, read N- to C-terminus: Transcription elongation factor GreA (157 aa).

Positions methionine 1 to valine 75 form a coiled coil.

The protein belongs to the GreA/GreB family.

Its function is as follows. Necessary for efficient RNA polymerase transcription elongation past template-encoded arresting sites. The arresting sites in DNA have the property of trapping a certain fraction of elongating RNA polymerases that pass through, resulting in locked ternary complexes. Cleavage of the nascent transcript by cleavage factors such as GreA or GreB allows the resumption of elongation from the new 3'terminus. GreA releases sequences of 2 to 3 nucleotides. The protein is Transcription elongation factor GreA of Mycoplasma mycoides subsp. mycoides SC (strain CCUG 32753 / NCTC 10114 / PG1).